Consider the following 424-residue polypeptide: MAKNIQAIRGMNDYLPGETAIWQRIEGTLKNVLGSYGYSEIRLPIVEQTPLFKRAIGEVTDVVEKEMYTFEDRNGDSLTLRPEGTAGCVRAGIEHGLLYNQEQRLWYIGPMFRHERPQKGRYRQFHQLGCEVFGLQGPDIDAELIMLTARWWRALGISEHVTLELNSIGSLEARANYRDALVAFLEQHKEKLDEDCKRRMYTNPLRVLDSKNPEVQALLNDAPALGDYLDEESREHFAGLCKLLESAGIAYTVNQRLVRGLDYYNRTVFEWVTNSLGSQGTVCAGGRYDGLVEQLGGRATPAVGFAMGLERLVLLVQAVNPEFKADPVVDIYLVASGADTQSAAMALAERLRDELPGVKLMTNHGGGNFKKQFARADKWGARVAVVLGESEVANGTAVVKDLRSGEQTAVAQDSVAAHLRTLLG.

Belongs to the class-II aminoacyl-tRNA synthetase family. In terms of assembly, homodimer.

It is found in the cytoplasm. It catalyses the reaction tRNA(His) + L-histidine + ATP = L-histidyl-tRNA(His) + AMP + diphosphate + H(+). The polypeptide is Histidine--tRNA ligase (Escherichia coli O139:H28 (strain E24377A / ETEC)).